The primary structure comprises 161 residues: Small heat shock protein ibp (161 aa).

The sHSP domain maps to glutamate 35–proline 150.

It belongs to the small heat shock protein (HSP20) family.

In Buchnera aphidicola subsp. Schizaphis graminum (strain Sg), this protein is Small heat shock protein ibp (ibp).